Here is a 445-residue protein sequence, read N- to C-terminus: Glutamate--tRNA ligase 1 (445 aa).

The 'HIGH' region signature appears at 9-19 (PSPTGYLHVGN). The short motif at 238-242 (KISKR) is the 'KMSKS' region element. Position 241 (lysine 241) interacts with ATP.

Belongs to the class-I aminoacyl-tRNA synthetase family. Glutamate--tRNA ligase type 1 subfamily. As to quaternary structure, monomer.

It is found in the cytoplasm. The enzyme catalyses tRNA(Glu) + L-glutamate + ATP = L-glutamyl-tRNA(Glu) + AMP + diphosphate. Catalyzes the attachment of glutamate to tRNA(Glu) in a two-step reaction: glutamate is first activated by ATP to form Glu-AMP and then transferred to the acceptor end of tRNA(Glu). The polypeptide is Glutamate--tRNA ligase 1 (Ehrlichia ruminantium (strain Gardel)).